A 392-amino-acid polypeptide reads, in one-letter code: Cyclic AMP receptor 1 (392 aa).

Residues 1–13 are Extracellular-facing; the sequence is MGLLDGNPANETS. Residue Asn-10 is glycosylated (N-linked (GlcNAc...) asparagine). A helical transmembrane segment spans residues 14 to 33; it reads LVLLLFADFSSMLGCMAVLI. Over 34-47 the chain is Cytoplasmic; that stretch reads GFWRLKLLRNHVTK. A helical transmembrane segment spans residues 48-68; it reads VIACFCATSFCKDFPSTILTL. Residues 69–83 are Extracellular-facing; it reads TNTAVNGGFPCYLYA. Residues 84-109 traverse the membrane as a helical segment; it reads IVITYGSFACWLWTLCLAISIYMLIV. The Cytoplasmic portion of the chain corresponds to 110 to 120; the sequence is KREPEPERFEK. Residues 121-139 form a helical membrane-spanning segment; that stretch reads YYYLLCWGLPLISTIVMLA. Residues 140–162 are Extracellular-facing; it reads KNTVQFVGNWCWIGVSFTGYRFG. A helical membrane pass occupies residues 163–181; sequence LFYGPFLFIWAISAVLVGL. The Cytoplasmic segment spans residues 182–205; sequence TSRYTYVVIHNGVSDNKEKHLTYQ. The chain crosses the membrane as a helical span at residues 206-224; that stretch reads FKLINYIIVFLVCWVFAVV. At 225–235 the chain is on the extracellular side; it reads NRIVNGLNMFP. The chain crosses the membrane as a helical span at residues 236–260; that stretch reads PALNILHTYLSVSHGFWASVTFIYN. Residues 261–392 lie on the Cytoplasmic side of the membrane; that stretch reads NPLMWRYFGA…STSTNGQGNN (132 aa). Disordered stretches follow at residues 292–324 and 339–392; these read NKNN…VQCS and VNNQ…QGNN. Positions 298 to 310 are enriched in polar residues; it reads PSPYSSSRGTSGK. 13 positions are modified to phosphoserine: Ser-299, Ser-302, Ser-303, Ser-304, Ser-308, Ser-360, Ser-361, Ser-362, Ser-363, Ser-364, Ser-366, Ser-367, and Ser-368. Over residues 340-367 the composition is skewed to low complexity; the sequence is NNQQNLNNNYGLQQNYNDEGSSSSSLSS. A compositionally biased stretch (polar residues) spans 375-392; the sequence is VEMQNIQISTSTNGQGNN.

It belongs to the G-protein coupled receptor 5 family. Post-translationally, C-terminal Ser or Thr residues may be phosphorylated.

The protein localises to the membrane. Its function is as follows. Receptor for cAMP. Coordinates the aggregation of individual cells into a multicellular organism and regulates the expression of a large number of developmentally regulated genes. The activity of this receptor is mediated by G proteins. The sequence is that of Cyclic AMP receptor 1 (carA-1) from Dictyostelium discoideum (Social amoeba).